A 271-amino-acid chain; its full sequence is Glutamate racemase (271 aa).

Substrate is bound by residues 10–11 (DS) and 42–43 (YG). Cys73 acts as the Proton donor/acceptor in catalysis. Position 74–75 (74–75 (NT)) interacts with substrate. The Proton donor/acceptor role is filled by Cys183. 184-185 (TH) provides a ligand contact to substrate.

It belongs to the aspartate/glutamate racemases family.

The enzyme catalyses L-glutamate = D-glutamate. The protein operates within cell wall biogenesis; peptidoglycan biosynthesis. In terms of biological role, provides the (R)-glutamate required for cell wall biosynthesis. In Lactococcus lactis subsp. lactis (strain IL1403) (Streptococcus lactis), this protein is Glutamate racemase.